The following is a 547-amino-acid chain: Probable bifunctional tRNA threonylcarbamoyladenosine biosynthesis protein (547 aa).

Residues 1-329 are kae1; sequence MGNSNELICI…FRTDMVDVNW (329 aa). H112, H116, and Y133 together coordinate Fe cation. L-threonylcarbamoyladenylate is bound by residues 133 to 137, D165, G178, E182, and N262; that span reads YVSGG. D290 provides a ligand contact to Fe cation. The Protein kinase domain occupies 346–547; the sequence is QIPRHLIGKG…KEVEKRGRYL (202 aa). ATP-binding positions include 352–360 and K373; that span reads IGKGAEADI. D465 acts as the Proton acceptor; for kinase activity in catalysis.

It in the N-terminal section; belongs to the KAE1 / TsaD family. This sequence in the C-terminal section; belongs to the protein kinase superfamily. Tyr protein kinase family. BUD32 subfamily. Component of the KEOPS complex that consists of Kae1, Bud32, Cgi121 and Pcc1; the whole complex dimerizes. Requires Fe(2+) as cofactor.

Its subcellular location is the cytoplasm. It carries out the reaction L-seryl-[protein] + ATP = O-phospho-L-seryl-[protein] + ADP + H(+). The catalysed reaction is L-threonyl-[protein] + ATP = O-phospho-L-threonyl-[protein] + ADP + H(+). The enzyme catalyses L-threonylcarbamoyladenylate + adenosine(37) in tRNA = N(6)-L-threonylcarbamoyladenosine(37) in tRNA + AMP + H(+). Functionally, required for the formation of a threonylcarbamoyl group on adenosine at position 37 (t(6)A37) in tRNAs that read codons beginning with adenine. Is a component of the KEOPS complex that is probably involved in the transfer of the threonylcarbamoyl moiety of threonylcarbamoyl-AMP (TC-AMP) to the N6 group of A37. The Kae1 domain likely plays a direct catalytic role in this reaction. The Bud32 domain probably displays kinase activity that regulates Kae1 function. The chain is Probable bifunctional tRNA threonylcarbamoyladenosine biosynthesis protein from Methanococcus vannielii (strain ATCC 35089 / DSM 1224 / JCM 13029 / OCM 148 / SB).